Consider the following 142-residue polypeptide: Prefoldin subunit alpha (142 aa).

It belongs to the prefoldin subunit alpha family. Heterohexamer of two alpha and four beta subunits.

The protein resides in the cytoplasm. Its function is as follows. Molecular chaperone capable of stabilizing a range of proteins. Seems to fulfill an ATP-independent, HSP70-like function in archaeal de novo protein folding. This is Prefoldin subunit alpha from Methanosarcina mazei (strain ATCC BAA-159 / DSM 3647 / Goe1 / Go1 / JCM 11833 / OCM 88) (Methanosarcina frisia).